Consider the following 495-residue polypeptide: Methyl viologen resistance protein SmvA (495 aa).

14 helical membrane-spanning segments follow: residues 5–25 (WLTL…ATVL), 44–64 (LWII…MGAL), 73–93 (LLML…FSHT), 96–116 (WLIA…PATL), 135–155 (VWAA…GILL), 158–178 (FYWG…MGLT), 192–212 (PLNL…VYSA), 220–240 (LSLW…GLFI), 260–280 (IILS…GFEL), 299–319 (VFML…GVLV), 327–347 (VATG…MTDF), 357–377 (LMAL…SAIM), 391–411 (IETM…GLLL), and 469–489 (VALS…WFSL).

Belongs to the major facilitator superfamily. TCR/Tet family.

Its subcellular location is the cell inner membrane. Functionally, major efflux pump for acriflavine and other quaternary ammonium compounds (QACs). Also required for resistance to methyl viologen. In Salmonella typhimurium (strain LT2 / SGSC1412 / ATCC 700720), this protein is Methyl viologen resistance protein SmvA (smvA).